The chain runs to 480 residues: Phenolic acid decarboxylase (480 aa).

Mn(2+) is bound by residues N163, H185, and E227. Prenylated FMN-binding positions include 163–168 (NVGTYR) and 184–185 (MH). E278 serves as the catalytic Proton donor. The disordered stretch occupies residues 443–466 (TTPVPPEPNPRETQLLDPPDGTEE).

The protein belongs to the UbiD family. YclC subfamily. Homohexamer. Prenylated FMN is required as a cofactor. It depends on Mn(2+) as a cofactor.

It carries out the reaction 4-hydroxybenzoate + H(+) = phenol + CO2. The catalysed reaction is 3,4-dihydroxybenzoate + H(+) = catechol + CO2. Inhibited by Zn(2+), (2,3,4)-trihydroxybenzoate and (3,4,5)-trihydroxybenzoate. Ammonium and rubidium ions decrease the activity of the carboxylation of 3,4-dihydroxybenzoate by about 20%. Involved in the non-oxidative decarboxylation and detoxification of phenolic derivatives under anaerobic conditions. Oxygen-sensitive phenolic acid decarboxylase that catalyzes the reversible decarboxylation of 4-hydroxybenzoate and 3,4-dihydroxybenzoate. In Sedimentibacter hydroxybenzoicus (Clostridium hydroxybenzoicum), this protein is Phenolic acid decarboxylase.